Reading from the N-terminus, the 666-residue chain is MRKINLLDLETTNKIAAGEVIERPFSVVKELVENSIDAGAKNITIEIEDGGQNLIKIIDDGEGIYPIDIKNAFLPHATSKINSIEDIYKISTMGFRGEALASISSVSKTKLKSRVDSYNFGKEIYIEGGKIEYLKDTGCNVGTTIEVSDLFYNVPARLKFLKSARSDSSSISDIVNRFILAHPDISFNLINKGKQSIKSYGTGNLKDSIRCVYNKTISENLINFESHKDIISVYGFIGKPEISRKSRTNQSIFVNKRYVKSKFITAAVENAFKSFLTVNSYPFFVIFIDIFPEYIDVNVHPTKSEVKFKDERAMFKTIFDAVHEAIKGELKESFTNFFNKEDINMYDSEKSIAETIKLEKEEVQIPIDLNSNNKIDIFGNNINKLPNNAELLKNIGIKEKNTLENNNNFYTSKQNEICYTNKNDECLNSCNKDDYSKIEKPLQKDNKNLDALYLNEHNTNSSPINIKENKPNNFYVDMKIIGQFNNTYILIEKDKELYIIDQHAAHEKVLFEKFKSEIEKGYVISQILLSPVVIELSEDEFNIYEENKDIFKNSGFSVETFGECTINIKEVPLILGKPNVEDLFMDILYNLKNMKSKETSTIKYNAIATLACKSAVKANDNLKEEEIKKLIENMLTLNNPYTCPHGRPTMIKFTLKDLEKKFKRIQ.

The protein belongs to the DNA mismatch repair MutL/HexB family.

Functionally, this protein is involved in the repair of mismatches in DNA. It is required for dam-dependent methyl-directed DNA mismatch repair. May act as a 'molecular matchmaker', a protein that promotes the formation of a stable complex between two or more DNA-binding proteins in an ATP-dependent manner without itself being part of a final effector complex. The chain is DNA mismatch repair protein MutL from Clostridium botulinum (strain Kyoto / Type A2).